The primary structure comprises 363 residues: uncharacterized protein (363 aa).

The next 4 helical transmembrane spans lie at 34 to 54, 60 to 80, 91 to 111, and 112 to 132; these read YVYD…IILW, LALF…TLLV, EIAD…TAAG, and LMFS…PLFL. Residues 232–245 are compositionally biased toward polar residues; that stretch reads SSTTTHSTDSEQIL. Positions 232 to 363 are disordered; it reads SSTTTHSTDS…SSQKKKPSRK (132 aa). Composition is skewed to low complexity over residues 246–268 and 275–285; these read TSVS…TPPN and DSNSSDSSSSS. Residues 322–342 show a composition bias toward basic and acidic residues; the sequence is SRSERNAQHHRNKDQEQRQDS.

It belongs to the chlamydial CPn_0443/CT_005/TC_0273 family.

The protein resides in the cell membrane. This is an uncharacterized protein from Chlamydia trachomatis serovar D (strain ATCC VR-885 / DSM 19411 / UW-3/Cx).